The following is a 554-amino-acid chain: MRDCKVGLDFGTTFSTVSTLVNNSMYVLRLGDSAYIPTCIAITPGGEAIIGGAAEVLSGDDTPHCFFYDLKRWVGVDDNTFKFAMNKIRPKYVAELVEGEVYLTGINKGFSIKLSVKQLIKAYIETIVRLLASSYSLRVIDLNQSVPADYKNAQRLAARSVLKALSFPCRRIINEPSAAAVYCVSRYPNYNYFLVYDFGGGTFDVSLIGKYKSYVTVIDTEGDSFLGGRDIDKSIEDYLVGKYNIKKVIPATYLALIKEECNNTNKSIFTILFDDGSVQVVEFSKSELEKCVRPFVERSIKLINDVVVRNKLTSGVIYMVGGSSLLQPVQDMVRSYASTKGLTLVADQDMRSAVSYGCSVLHKLEDNKEIVYIDCNSHPLSDISFNCDPEPIIRKPMSIPYTHTVKMRHDRPLKTIVNIYEGSNLFMPENDWLISSNINTTDFAKVGEEYSKVYEYDIDGIITLKIRNEVTGKMFTLPNSFTKSDNIKPITFKLTQLSNTDDLATLTSLLGYHDKNFERFYGLFNVPTILIKEIDKLGGFKTLYRRLKSMNANF.

It belongs to the heat shock protein 70 family.

The protein resides in the virion. Transports viral genome to neighboring plant cells directly through plasmosdesmata, without any budding. The movement protein allows efficient cell to cell propagation, by bypassing the host cell wall barrier. Two movement proteins, p6, Hsp70h and three structural proteins, CP, CPm, and P64 are essential for cell-cell movement. Also plays a role in virion formation. Together with CPm and p64, encapsidates the 5'-terminal portion of the viral genome. The chain is Movement protein Hsp70h from Lettuce infectious yellows virus (isolate United States/92) (LIYV).